We begin with the raw amino-acid sequence, 508 residues long: Photosystem II CP47 reaction center protein (508 aa).

A run of 6 helical transmembrane segments spans residues 21 to 36 (SVHI…WAGS), 101 to 115 (IMFS…IWHW), 140 to 156 (GIHL…FGAF), 203 to 218 (IAAG…FHLS), 237 to 252 (VLSS…AFVV), and 457 to 472 (SFAL…HGAR).

The protein belongs to the PsbB/PsbC family. PsbB subfamily. PSII is composed of 1 copy each of membrane proteins PsbA, PsbB, PsbC, PsbD, PsbE, PsbF, PsbH, PsbI, PsbJ, PsbK, PsbL, PsbM, PsbT, PsbX, PsbY, PsbZ, Psb30/Ycf12, at least 3 peripheral proteins of the oxygen-evolving complex and a large number of cofactors. It forms dimeric complexes. It depends on Binds multiple chlorophylls. PSII binds additional chlorophylls, carotenoids and specific lipids. as a cofactor.

It localises to the plastid. The protein resides in the chloroplast thylakoid membrane. One of the components of the core complex of photosystem II (PSII). It binds chlorophyll and helps catalyze the primary light-induced photochemical processes of PSII. PSII is a light-driven water:plastoquinone oxidoreductase, using light energy to abstract electrons from H(2)O, generating O(2) and a proton gradient subsequently used for ATP formation. The polypeptide is Photosystem II CP47 reaction center protein (Ceratophyllum demersum (Rigid hornwort)).